A 239-amino-acid chain; its full sequence is Lytic polysaccharide monooxygenase-like protein X325 (239 aa).

The N-terminal stretch at 1–24 (MVLPSSVSQWAALIALLCAGLANA) is a signal peptide. A Cu(2+)-binding site is contributed by H25. N-linked (GlcNAc...) asparagine glycosylation is found at N41, N56, N79, N117, N150, and N197. Disulfide bonds link C71-C176 and C141-C195. Residue S214 is the site of GPI-anchor amidated serine attachment. Residues 215–239 (AAAPKSSLMSVLPVYMVALLSWAMM) constitute a propeptide, removed in mature form.

It belongs to the X325 family. Cu(2+) serves as cofactor.

It localises to the cell membrane. Its function is as follows. Lytic polysaccharide monooxygenase-like protein that has diverged to biological functions other than polysaccharide degradation since it does not perform oxidative cleavage of polysaccharides. Acts as a cell surface-bound protein that functions in the copper-accumulation pathway. May also act as the major cell wall sensor that regulates MAP kinase-dependent hyphal anastomosis, the fusion of hyphal cells. This is Lytic polysaccharide monooxygenase-like protein X325 from Aspergillus fumigatus (strain ATCC MYA-4609 / CBS 101355 / FGSC A1100 / Af293) (Neosartorya fumigata).